The primary structure comprises 144 residues: Eukaryotic translation initiation factor 1A, Y-chromosomal (144 aa).

The span at 1–15 shows a compositional bias: basic residues; the sequence is MPKNKGKGGKNRRRG. The disordered stretch occupies residues 1-26; the sequence is MPKNKGKGGKNRRRGKNENESEKREL. Residues 16-26 are compositionally biased toward basic and acidic residues; sequence KNENESEKREL. The region spanning 22–96 is the S1-like domain; it reads EKRELVFKED…NKADVILKYN (75 aa). Residue K88 forms a Glycyl lysine isopeptide (Lys-Gly) (interchain with G-Cter in ubiquitin) linkage. The disordered stretch occupies residues 114–144; that stretch reads KINETDTFGPGDDDEVQFDDIGDDDEDIDDI. Residues 124–144 are compositionally biased toward acidic residues; the sequence is GDDDEVQFDDIGDDDEDIDDI.

This sequence belongs to the eIF-1A family. In terms of assembly, component of the 43S pre-initiation complex (43S PIC), which is composed of the 40S ribosomal subunit, EIF1, eIF1A (EIF1AX), eIF3 complex, EIF5 and eIF2-GTP-initiator tRNA complex (eIF2 ternary complex). Interacts with EIF5; this interaction contributes to the maintenance of EIF1 within the open 43S PIC. Interacts through its C-terminal domain (CTD) with the CTD of EIF5B; from the location of the start codon by the 43S complex until the formation of the 80S complex. Ubiquitous.

It localises to the cytoplasm. Functionally, component of the 43S pre-initiation complex (43S PIC), which binds to the mRNA cap-proximal region, scans mRNA 5'-untranslated region, and locates the initiation codon. This protein enhances formation of the cap-proximal complex. Together with EIF1, facilitates scanning, start codon recognition, promotion of the assembly of 48S complex at the initiation codon (43S PIC becomes 48S PIC after the start codon is reached), and dissociation of aberrant complexes. After start codon location, together with EIF5B orients the initiator methionine-tRNA in a conformation that allows 60S ribosomal subunit joining to form the 80S initiation complex. Is released after 80S initiation complex formation, just after GTP hydrolysis by EIF5B, and before release of EIF5B. Its globular part is located in the A site of the 40S ribosomal subunit. Its interaction with EIF5 during scanning contribute to the maintenance of EIF1 within the open 43S PIC. In contrast to yeast orthologs, does not bind EIF1. This is Eukaryotic translation initiation factor 1A, Y-chromosomal (EIF1AY) from Pan troglodytes (Chimpanzee).